Reading from the N-terminus, the 269-residue chain is 4-hydroxy-tetrahydrodipicolinate reductase (269 aa).

NAD(+)-binding positions include 8–13 (GAAGRM) and glutamate 34. Arginine 35 contributes to the NADP(+) binding site. Residues 98–100 (GTT) and 122–125 (APNY) contribute to the NAD(+) site. Histidine 155 functions as the Proton donor/acceptor in the catalytic mechanism. Histidine 156 is a binding site for (S)-2,3,4,5-tetrahydrodipicolinate. The active-site Proton donor is the lysine 159. A (S)-2,3,4,5-tetrahydrodipicolinate-binding site is contributed by 165 to 166 (GT).

The protein belongs to the DapB family.

Its subcellular location is the cytoplasm. The enzyme catalyses (S)-2,3,4,5-tetrahydrodipicolinate + NAD(+) + H2O = (2S,4S)-4-hydroxy-2,3,4,5-tetrahydrodipicolinate + NADH + H(+). The catalysed reaction is (S)-2,3,4,5-tetrahydrodipicolinate + NADP(+) + H2O = (2S,4S)-4-hydroxy-2,3,4,5-tetrahydrodipicolinate + NADPH + H(+). Its pathway is amino-acid biosynthesis; L-lysine biosynthesis via DAP pathway; (S)-tetrahydrodipicolinate from L-aspartate: step 4/4. In terms of biological role, catalyzes the conversion of 4-hydroxy-tetrahydrodipicolinate (HTPA) to tetrahydrodipicolinate. This is 4-hydroxy-tetrahydrodipicolinate reductase from Vibrio cholerae serotype O1 (strain ATCC 39315 / El Tor Inaba N16961).